Consider the following 155-residue polypeptide: SsrA-binding protein (155 aa).

Belongs to the SmpB family.

Its subcellular location is the cytoplasm. Its function is as follows. Required for rescue of stalled ribosomes mediated by trans-translation. Binds to transfer-messenger RNA (tmRNA), required for stable association of tmRNA with ribosomes. tmRNA and SmpB together mimic tRNA shape, replacing the anticodon stem-loop with SmpB. tmRNA is encoded by the ssrA gene; the 2 termini fold to resemble tRNA(Ala) and it encodes a 'tag peptide', a short internal open reading frame. During trans-translation Ala-aminoacylated tmRNA acts like a tRNA, entering the A-site of stalled ribosomes, displacing the stalled mRNA. The ribosome then switches to translate the ORF on the tmRNA; the nascent peptide is terminated with the 'tag peptide' encoded by the tmRNA and targeted for degradation. The ribosome is freed to recommence translation, which seems to be the essential function of trans-translation. The chain is SsrA-binding protein from Lawsonia intracellularis (strain PHE/MN1-00).